We begin with the raw amino-acid sequence, 178 residues long: Ribulose bisphosphate carboxylase small subunit, chloroplastic 4 (178 aa).

A chloroplast-targeting transit peptide spans 1-54 (MASISSTVATVSRAAPAQANMVAPFTGLKSNAAFPATKKANDFSTLPSNGGRVQ).

The protein belongs to the RuBisCO small chain family. As to quaternary structure, heterohexadecamer of 8 large and 8 small subunits.

The protein resides in the plastid. The protein localises to the chloroplast. RuBisCO catalyzes two reactions: the carboxylation of D-ribulose 1,5-bisphosphate, the primary event in carbon dioxide fixation, as well as the oxidative fragmentation of the pentose substrate. Both reactions occur simultaneously and in competition at the same active site. Although the small subunit is not catalytic it is essential for maximal activity. The protein is Ribulose bisphosphate carboxylase small subunit, chloroplastic 4 of Flaveria pringlei.